The chain runs to 351 residues: Anthranilate phosphoribosyltransferase (351 aa).

5-phospho-alpha-D-ribose 1-diphosphate-binding positions include Gly84, 87 to 88 (GD), 95 to 98 (NISS), 113 to 121 (KHGNRGASS), and Ala125. Gly84 is a binding site for anthranilate. Ser97 is a binding site for Mg(2+). Asn116 serves as a coordination point for anthranilate. Position 171 (Arg171) interacts with anthranilate. Positions 229 and 230 each coordinate Mg(2+).

This sequence belongs to the anthranilate phosphoribosyltransferase family. In terms of assembly, homodimer. Mg(2+) serves as cofactor.

It carries out the reaction N-(5-phospho-beta-D-ribosyl)anthranilate + diphosphate = 5-phospho-alpha-D-ribose 1-diphosphate + anthranilate. Its pathway is amino-acid biosynthesis; L-tryptophan biosynthesis; L-tryptophan from chorismate: step 2/5. Functionally, catalyzes the transfer of the phosphoribosyl group of 5-phosphorylribose-1-pyrophosphate (PRPP) to anthranilate to yield N-(5'-phosphoribosyl)-anthranilate (PRA). The polypeptide is Anthranilate phosphoribosyltransferase (Clavibacter sepedonicus (Clavibacter michiganensis subsp. sepedonicus)).